Consider the following 125-residue polypeptide: NADPH-dependent 7-cyano-7-deazaguanine reductase (125 aa).

The active-site Thioimide intermediate is Cys40. Asp47 (proton donor) is an active-site residue. Residues 62–64 (LET) and 81–82 (HE) each bind substrate.

The protein belongs to the GTP cyclohydrolase I family. QueF type 1 subfamily.

Its subcellular location is the cytoplasm. It catalyses the reaction 7-aminomethyl-7-carbaguanine + 2 NADP(+) = 7-cyano-7-deazaguanine + 2 NADPH + 3 H(+). It functions in the pathway tRNA modification; tRNA-queuosine biosynthesis. In terms of biological role, catalyzes the NADPH-dependent reduction of 7-cyano-7-deazaguanine (preQ0) to 7-aminomethyl-7-deazaguanine (preQ1). The polypeptide is NADPH-dependent 7-cyano-7-deazaguanine reductase (Frankia casuarinae (strain DSM 45818 / CECT 9043 / HFP020203 / CcI3)).